The chain runs to 587 residues: Zinc finger protein 496 (587 aa).

Residues Met-1–Ser-40 are disordered. Residues Ala-11–Lys-20 are compositionally biased toward basic and acidic residues. Lys-13 participates in a covalent cross-link: Glycyl lysine isopeptide (Lys-Gly) (interchain with G-Cter in SUMO2). The SCAN box domain occupies Arg-42 to Pro-124. Ser-185 bears the Phosphoserine mark. One can recognise a KRAB domain in the interval Ser-221–Val-291. Residues Pro-260–Glu-282 form a disordered region. A Phosphoserine modification is found at Ser-299. Positions Ser-358–Val-399 are disordered. Positions His-389 to Val-399 are enriched in polar residues. A Glycyl lysine isopeptide (Lys-Gly) (interchain with G-Cter in SUMO2) cross-link involves residue Lys-403. Residues Tyr-406–Arg-428 form a C2H2-type 1; degenerate zinc finger. 2 consecutive C2H2-type zinc fingers follow at residues His-435 to His-457 and Tyr-463 to His-485. The interval Pro-488–Leu-513 is disordered. A Glycyl lysine isopeptide (Lys-Gly) (interchain with G-Cter in SUMO2) cross-link involves residue Lys-496. C2H2-type zinc fingers lie at residues Phe-522–His-545 and Phe-553–His-575.

This sequence belongs to the krueppel C2H2-type zinc-finger protein family. In terms of assembly, interacts (via zinc-fingers) with JARID2. Interacts with NSD1.

It is found in the nucleus. Functionally, DNA-binding transcription factor that can both act as an activator and a repressor. In Homo sapiens (Human), this protein is Zinc finger protein 496 (ZNF496).